A 119-amino-acid chain; its full sequence is Small ribosomal subunit protein uS10 (119 aa).

At Ala-2 the chain carries N-acetylalanine. Residue Lys-4 forms a Glycyl lysine isopeptide (Lys-Gly) (interchain with G-Cter in ubiquitin) linkage. N6-succinyllysine; alternate is present on Lys-8. A Glycyl lysine isopeptide (Lys-Gly) (interchain with G-Cter in ubiquitin); alternate cross-link involves residue Lys-8. Phosphothreonine is present on Thr-9. 2 positions are modified to N6-acetyllysine: Lys-34 and Lys-75. At Ser-93 the chain carries Phosphoserine.

The protein belongs to the universal ribosomal protein uS10 family. As to quaternary structure, component of the 40S small ribosomal subunit. In terms of processing, polyubiquitinated by ZNF598 via 'Lys-63'-linked ubiquitin chains when a ribosome has stalled, initiating the ribosome quality control (RQC) pathway to degrade the potentially detrimental aberrant nascent polypeptide. Deubiquitinated by OTUD3 and USP21, antagonizing ZNF598 activity. Ufmylated by UFL1.

It is found in the cytoplasm. Its function is as follows. Component of the small ribosomal subunit. The ribosome is a large ribonucleoprotein complex responsible for the synthesis of proteins in the cell. The sequence is that of Small ribosomal subunit protein uS10 (RPS20) from Pongo abelii (Sumatran orangutan).